Reading from the N-terminus, the 108-residue chain is L-rhamnose mutarotase (108 aa).

Tyr18 contributes to the substrate binding site. His22 acts as the Proton donor in catalysis. Substrate contacts are provided by residues Tyr41 and 76–77; that span reads WW.

This sequence belongs to the rhamnose mutarotase family. In terms of assembly, homodimer.

The protein localises to the cytoplasm. It catalyses the reaction alpha-L-rhamnose = beta-L-rhamnose. Its pathway is carbohydrate metabolism; L-rhamnose metabolism. In terms of biological role, involved in the anomeric conversion of L-rhamnose. The protein is L-rhamnose mutarotase of Paraburkholderia phymatum (strain DSM 17167 / CIP 108236 / LMG 21445 / STM815) (Burkholderia phymatum).